Consider the following 147-residue polypeptide: Hemoglobin subunit deltaH (147 aa).

The Globin domain maps to 3-147; sequence RLTDSEKAEV…MANALAHKYH (145 aa). The heme b site is built by histidine 64 and histidine 93.

It belongs to the globin family. Heterotetramer of two delta chains and two alpha chains. Red blood cells.

The protein is Hemoglobin subunit deltaH of Procavia capensis (Rock hyrax).